The sequence spans 250 residues: Ribosomal RNA small subunit methyltransferase J (250 aa).

S-adenosyl-L-methionine contacts are provided by residues 96-97 and aspartate 168; that span reads RD.

Belongs to the methyltransferase superfamily. RsmJ family.

Its subcellular location is the cytoplasm. It catalyses the reaction guanosine(1516) in 16S rRNA + S-adenosyl-L-methionine = N(2)-methylguanosine(1516) in 16S rRNA + S-adenosyl-L-homocysteine + H(+). Functionally, specifically methylates the guanosine in position 1516 of 16S rRNA. In Neisseria meningitidis serogroup B (strain ATCC BAA-335 / MC58), this protein is Ribosomal RNA small subunit methyltransferase J.